A 318-amino-acid chain; its full sequence is Death effector domain-containing protein (318 aa).

Residues 25-103 form the DED domain; that stretch reads SLHRMFDIVG…RHDLLPYVTL (79 aa). A disordered region spans residues 128-191; sequence PRALSDPEPR…SVTPDPKEKQ (64 aa).

In terms of assembly, interacts with CASP8, CASP10, KRT8, KRT18, CASP3 and FADD. Homodimerizes and heterodimerizes with DEDD2. In terms of processing, exists predominantly in a mono- or diubiquitinated form. As to expression, widely expressed with highest levels in testis. Within the testis, highly expressed in germ cells but not expressed in Sertoli cells.

The protein resides in the cytoplasm. It localises to the nucleus. It is found in the nucleolus. Functionally, a scaffold protein that directs CASP3 to certain substrates and facilitates their ordered degradation during apoptosis. May also play a role in mediating CASP3 cleavage of KRT18. Regulates degradation of intermediate filaments during apoptosis. May play a role in the general transcription machinery in the nucleus and might be an important regulator of the activity of GTF3C3. Inhibits DNA transcription in vitro. The chain is Death effector domain-containing protein (Dedd) from Rattus norvegicus (Rat).